Reading from the N-terminus, the 80-residue chain is Defensin-like protein 207 (80 aa).

The signal sequence occupies residues 1–29 (MAKNLNSVSFIVLLLVLLVASTEILKSDA). Cystine bridges form between cysteine 38-cysteine 64, cysteine 50-cysteine 75, and cysteine 54-cysteine 77.

It belongs to the DEFL family.

Its subcellular location is the secreted. The chain is Defensin-like protein 207 from Arabidopsis thaliana (Mouse-ear cress).